Here is a 919-residue protein sequence, read N- to C-terminus: GPI ethanolamine phosphate transferase 1 (919 aa).

At 1 to 8 (MWSRHRLY) the chain is on the cytoplasmic side. Residues 9–29 (FIVAGVLFHLFYLWSIFDIYF) form a helical membrane-spanning segment. The Lumenal segment spans residues 30–456 (VSPLVHGMKQ…TTYNWRFIRT (427 aa)). N-linked (GlcNAc...) asparagine glycans are attached at residues N138, N196, N201, N285, and N311. Residues 457–477 (IVTLGFLGWIVYSFSIFLRLF) traverse the membrane as a helical segment. Topologically, residues 478–487 (ILNRDYNSHK) are cytoplasmic. Residues 488–508 (SLLNYFIFGSLTIILNYVLYY) traverse the membrane as a helical segment. At 509–510 (QK) the chain is on the lumenal side. The chain crosses the membrane as a helical span at residues 511 to 531 (APFNYYMYLFFPLIFWSEIFT). Topologically, residues 532–558 (DRVVLDDGVKEFLKGISIPKRIILVSA) are cytoplasmic. Residues 559 to 579 (IILVYESIVYAFFDRWIFSLI) form a helical membrane-spanning segment. Residues 580-598 (FNMLSFYPLICGYRDWKRN) are Lumenal-facing. The helical transmembrane segment at 599-619 (TLWFITGAAISVFTLLDAVKI) threads the bilayer. E620 is a topological domain (cytoplasmic). Residues 621–641 (SLTQINIASGLIVLTALSGFL) traverse the membrane as a helical segment. At 642–653 (HLRKQLNSYTTT) the chain is on the lumenal side. The helical transmembrane segment at 654–674 (VFICQILLVILMVLATNKSIV) threads the bilayer. Over 675–686 (SLQNRTGLPRDA) the chain is Cytoplasmic. Residues 687–707 (QVAGWVILVVSLLLMPLIHYM) form a helical membrane-spanning segment. At 708–718 (KPNNNYKVRML) the chain is on the lumenal side. Residues 719–739 (IIFLTFAPTFIILTISFESFF) traverse the membrane as a helical segment. Residues 740 to 773 (YLVFSAYIVQWIEIESKLKEQTPNTSHYKQLIRV) lie on the Cytoplasmic side of the membrane. The helical transmembrane segment at 774 to 794 (TIIGFFLLQNAFFGTGNVASI) threads the bilayer. Residues 795-815 (SSFSLDSVYRLMPIFDPFPMG) are Lumenal-facing. A helical transmembrane segment spans residues 816 to 836 (ALLVIKLIIPYIILSAGLGIL). Over 837–845 (NLKLHIKDY) the chain is Cytoplasmic. The chain crosses the membrane as a helical span at residues 846–866 (TISTLIISTSDILSLNFFYLL). At 867–882 (KTEGSWLDIGITISNY) the chain is on the lumenal side. The helical transmembrane segment at 883–903 (CLAILSSLFMLILEIVAHVVL) threads the bilayer. The Cytoplasmic segment spans residues 904–919 (KNVQLSKPVIASKKTN).

The protein belongs to the PIGG/PIGN/PIGO family. PIGN subfamily.

It is found in the endoplasmic reticulum membrane. The protein operates within glycolipid biosynthesis; glycosylphosphatidylinositol-anchor biosynthesis. In terms of biological role, ethanolamine phosphate transferase involved in glycosylphosphatidylinositol-anchor biosynthesis. Transfers ethanolamine phosphate to the first alpha-1,4-linked mannose of the glycosylphosphatidylinositol precursor of GPI-anchor. This Kluyveromyces lactis (strain ATCC 8585 / CBS 2359 / DSM 70799 / NBRC 1267 / NRRL Y-1140 / WM37) (Yeast) protein is GPI ethanolamine phosphate transferase 1 (MCD4).